Here is a 258-residue protein sequence, read N- to C-terminus: Imidazole glycerol phosphate synthase subunit HisF (258 aa).

Catalysis depends on residues Asp11 and Asp130.

This sequence belongs to the HisA/HisF family. Heterodimer of HisH and HisF.

It localises to the cytoplasm. The catalysed reaction is 5-[(5-phospho-1-deoxy-D-ribulos-1-ylimino)methylamino]-1-(5-phospho-beta-D-ribosyl)imidazole-4-carboxamide + L-glutamine = D-erythro-1-(imidazol-4-yl)glycerol 3-phosphate + 5-amino-1-(5-phospho-beta-D-ribosyl)imidazole-4-carboxamide + L-glutamate + H(+). It participates in amino-acid biosynthesis; L-histidine biosynthesis; L-histidine from 5-phospho-alpha-D-ribose 1-diphosphate: step 5/9. Functionally, IGPS catalyzes the conversion of PRFAR and glutamine to IGP, AICAR and glutamate. The HisF subunit catalyzes the cyclization activity that produces IGP and AICAR from PRFAR using the ammonia provided by the HisH subunit. The protein is Imidazole glycerol phosphate synthase subunit HisF of Escherichia coli O1:K1 / APEC.